A 700-amino-acid chain; its full sequence is Translation initiation factor IF-2 (700 aa).

Positions 58 to 85 (KKEVKKQKEPSKEKGKSSEQVKVKEKSK) are disordered. The tr-type G domain maps to 191 to 365 (PRPPVVTIMG…EMQEIRCIPD (175 aa)). A G1 region spans residues 200-207 (GHVDHGKT). Residue 200 to 207 (GHVDHGKT) participates in GTP binding. The G2 stretch occupies residues 225–229 (GITQS). Positions 246 to 249 (DTPG) are G3. GTP contacts are provided by residues 246–250 (DTPGH) and 300–303 (NKID). Positions 300-303 (NKID) are G4. A G5 region spans residues 337–339 (SAK).

Belongs to the TRAFAC class translation factor GTPase superfamily. Classic translation factor GTPase family. IF-2 subfamily.

It is found in the cytoplasm. One of the essential components for the initiation of protein synthesis. Protects formylmethionyl-tRNA from spontaneous hydrolysis and promotes its binding to the 30S ribosomal subunits. Also involved in the hydrolysis of GTP during the formation of the 70S ribosomal complex. The polypeptide is Translation initiation factor IF-2 (Petrotoga mobilis (strain DSM 10674 / SJ95)).